Here is a 327-residue protein sequence, read N- to C-terminus: GMP reductase (327 aa).

The active-site Thioimidate intermediate is Cys-176. Ile-205–Val-228 is a binding site for NADP(+).

It belongs to the IMPDH/GMPR family. GuaC type 2 subfamily.

The catalysed reaction is IMP + NH4(+) + NADP(+) = GMP + NADPH + 2 H(+). Catalyzes the irreversible NADPH-dependent deamination of GMP to IMP. It functions in the conversion of nucleobase, nucleoside and nucleotide derivatives of G to A nucleotides, and in maintaining the intracellular balance of A and G nucleotides. This chain is GMP reductase, found in Streptococcus pyogenes serotype M5 (strain Manfredo).